The following is a 191-amino-acid chain: ATP synthase subunit delta (191 aa).

This sequence belongs to the ATPase delta chain family. In terms of assembly, F-type ATPases have 2 components, F(1) - the catalytic core - and F(0) - the membrane proton channel. F(1) has five subunits: alpha(3), beta(3), gamma(1), delta(1), epsilon(1). F(0) has three main subunits: a(1), b(2) and c(10-14). The alpha and beta chains form an alternating ring which encloses part of the gamma chain. F(1) is attached to F(0) by a central stalk formed by the gamma and epsilon chains, while a peripheral stalk is formed by the delta and b chains.

Its subcellular location is the cell inner membrane. F(1)F(0) ATP synthase produces ATP from ADP in the presence of a proton or sodium gradient. F-type ATPases consist of two structural domains, F(1) containing the extramembraneous catalytic core and F(0) containing the membrane proton channel, linked together by a central stalk and a peripheral stalk. During catalysis, ATP synthesis in the catalytic domain of F(1) is coupled via a rotary mechanism of the central stalk subunits to proton translocation. In terms of biological role, this protein is part of the stalk that links CF(0) to CF(1). It either transmits conformational changes from CF(0) to CF(1) or is implicated in proton conduction. This chain is ATP synthase subunit delta, found in Halothermothrix orenii (strain H 168 / OCM 544 / DSM 9562).